We begin with the raw amino-acid sequence, 476 residues long: Protein transport protein Sec61 subunit alpha (476 aa).

Residues 2-33 are Cytoplasmic-facing; the sequence is GIKFLEFIKPFCAVLPEIQKPERKIQFREKVL. A helical membrane pass occupies residues 34–53; the sequence is WTAITLFIFLVCCQIPLFGI. Topologically, residues 54–76 are lumenal; the sequence is MSSDSADPFYWMRVILASNRGTL. The chain crosses the membrane as a helical span at residues 77-96; sequence MELGISPIVTSGLIMQLLAG. The Cytoplasmic portion of the chain corresponds to 97–117; the sequence is AKIIEVGDTPKDRALFNGAQK. A helical transmembrane segment spans residues 118–138; sequence LFGMIITIGQAIVYVMTGMYG. Topologically, residues 139–144 are lumenal; that stretch reads DPSEMG. Residues 145–165 form a helical membrane-spanning segment; it reads AGICLLIIIQLFVAGLIVLLL. Residues 166–172 lie on the Cytoplasmic side of the membrane; it reads DELLQKG. The chain crosses the membrane as a helical span at residues 173–193; it reads YGLGSGISLFIATNICETIVW. Topologically, residues 194 to 240 are lumenal; the sequence is KAFSPTTVNTGRGTEFEGAIIALFHLLATRTDKVRALREAFYRQNLP. Residues 241–261 form a helical membrane-spanning segment; that stretch reads NILNLIATVFVFAVVIYFQGF. Over 262 to 288 the chain is Cytoplasmic; that stretch reads RVDLPIKSARYRGQYNTYPIKLFYTSN. The chain crosses the membrane as a helical span at residues 289-309; sequence IPIILQSALVSNLYVISQMLS. Residues 310–354 lie on the Lumenal side of the membrane; it reads TRFSGNFLVNLLGTWSDATSGGPARAYPVAGLCYYLSPPESFGSV. Residues 355–375 traverse the membrane as a helical segment; the sequence is LDDPVHAAIYIVFMLGSCAFF. Residues 376–420 lie on the Cytoplasmic side of the membrane; that stretch reads SKTWIEVSGSSAKDVAKQLKEQQMVMRGHRETSMVHELNRYIPTA. The chain crosses the membrane as a helical span at residues 421-441; it reads AAFGGLCIGGLSVMADFLGAI. The Lumenal segment spans residues 442–445; the sequence is GSGT. Residues 446 to 462 form a helical membrane-spanning segment; the sequence is GILLAVTIIYQYFEIFV. At 463–476 the chain is on the cytoplasmic side; the sequence is KEQSEMGSMGALLF.

This sequence belongs to the SecY/SEC61-alpha family. The SEC61 channel-forming translocon complex consists of channel-forming core components SEC61A1, SEC61B and SEC61G and different auxiliary components such as SEC62 and SEC63. The SEC61 channel associates with the multi-pass translocon (MPT) complex.

It is found in the endoplasmic reticulum membrane. Functionally, component of SEC61 channel-forming translocon complex that mediates transport of signal peptide-containing precursor polypeptides across the endoplasmic reticulum (ER). Forms a ribosome receptor and a gated pore in the ER membrane, both functions required for cotranslational translocation of nascent polypeptides. May cooperate with auxiliary protein SEC62, SEC63 and HSPA5/BiP to enable post-translational transport of small presecretory proteins. The SEC61 channel is also involved in ER membrane insertion of transmembrane proteins: it mediates membrane insertion of the first few transmembrane segments of proteins, while insertion of subsequent transmembrane regions of multi-pass membrane proteins is mediated by the multi-pass translocon (MPT) complex. In Notothenia angustata (Rockcod), this protein is Protein transport protein Sec61 subunit alpha (sec61a).